The primary structure comprises 100 residues: Large ribosomal subunit protein uL23 (100 aa).

This sequence belongs to the universal ribosomal protein uL23 family. Part of the 50S ribosomal subunit. Contacts protein L29, and trigger factor when it is bound to the ribosome.

In terms of biological role, one of the early assembly proteins it binds 23S rRNA. One of the proteins that surrounds the polypeptide exit tunnel on the outside of the ribosome. Forms the main docking site for trigger factor binding to the ribosome. The sequence is that of Large ribosomal subunit protein uL23 from Aliivibrio fischeri (strain MJ11) (Vibrio fischeri).